We begin with the raw amino-acid sequence, 355 residues long: tRNA-specific 2-thiouridylase MnmA (355 aa).

ATP contacts are provided by residues 6 to 13 (AMSGGVDS) and Met32. Cys93 functions as the Nucleophile in the catalytic mechanism. The cysteines at positions 93 and 191 are disulfide-linked. Gly117 contacts ATP. Residues 140–142 (KDQ) are interaction with tRNA. Cys191 functions as the Cysteine persulfide intermediate in the catalytic mechanism. An interaction with tRNA region spans residues 296-297 (RY).

The protein belongs to the MnmA/TRMU family.

It is found in the cytoplasm. It carries out the reaction S-sulfanyl-L-cysteinyl-[protein] + uridine(34) in tRNA + AH2 + ATP = 2-thiouridine(34) in tRNA + L-cysteinyl-[protein] + A + AMP + diphosphate + H(+). Functionally, catalyzes the 2-thiolation of uridine at the wobble position (U34) of tRNA, leading to the formation of s(2)U34. This Pelobacter propionicus (strain DSM 2379 / NBRC 103807 / OttBd1) protein is tRNA-specific 2-thiouridylase MnmA.